Consider the following 693-residue polypeptide: Elongation factor G (693 aa).

Residues 9–283 (ERVRNIGIIA…AVCDYLPSPV (275 aa)) form the tr-type G domain. Residues 18 to 25 (AHIDAGKT), 82 to 86 (DTPGH), and 136 to 139 (NKMD) contribute to the GTP site.

Belongs to the TRAFAC class translation factor GTPase superfamily. Classic translation factor GTPase family. EF-G/EF-2 subfamily.

It is found in the cytoplasm. Functionally, catalyzes the GTP-dependent ribosomal translocation step during translation elongation. During this step, the ribosome changes from the pre-translocational (PRE) to the post-translocational (POST) state as the newly formed A-site-bound peptidyl-tRNA and P-site-bound deacylated tRNA move to the P and E sites, respectively. Catalyzes the coordinated movement of the two tRNA molecules, the mRNA and conformational changes in the ribosome. The chain is Elongation factor G from Dehalococcoides mccartyi (strain ATCC BAA-2266 / KCTC 15142 / 195) (Dehalococcoides ethenogenes (strain 195)).